The sequence spans 408 residues: CinA-like protein (408 aa).

This sequence belongs to the CinA family.

The sequence is that of CinA-like protein from Anaeromyxobacter dehalogenans (strain 2CP-C).